Reading from the N-terminus, the 335-residue chain is Holliday junction branch migration complex subunit RuvB (335 aa).

Positions 4-184 (VDRIVSANAK…FGIVQRLEFY (181 aa)) are large ATPase domain (RuvB-L). Residues Ile-23, Arg-24, Gly-65, Lys-68, Thr-69, Thr-70, 131 to 133 (EDY), Arg-174, Tyr-184, and Arg-221 contribute to the ATP site. Thr-69 is a binding site for Mg(2+). The interval 185–255 (SVEDLASIVT…IAQEALKMLD (71 aa)) is small ATPAse domain (RuvB-S). A head domain (RuvB-H) region spans residues 258 to 335 (LAGFDFMDRK…RHFGLEQIEK (78 aa)). DNA-binding residues include Arg-294, Arg-313, and Arg-318.

Belongs to the RuvB family. As to quaternary structure, homohexamer. Forms an RuvA(8)-RuvB(12)-Holliday junction (HJ) complex. HJ DNA is sandwiched between 2 RuvA tetramers; dsDNA enters through RuvA and exits via RuvB. An RuvB hexamer assembles on each DNA strand where it exits the tetramer. Each RuvB hexamer is contacted by two RuvA subunits (via domain III) on 2 adjacent RuvB subunits; this complex drives branch migration. In the full resolvosome a probable DNA-RuvA(4)-RuvB(12)-RuvC(2) complex forms which resolves the HJ.

It localises to the cytoplasm. It carries out the reaction ATP + H2O = ADP + phosphate + H(+). In terms of biological role, the RuvA-RuvB-RuvC complex processes Holliday junction (HJ) DNA during genetic recombination and DNA repair, while the RuvA-RuvB complex plays an important role in the rescue of blocked DNA replication forks via replication fork reversal (RFR). RuvA specifically binds to HJ cruciform DNA, conferring on it an open structure. The RuvB hexamer acts as an ATP-dependent pump, pulling dsDNA into and through the RuvAB complex. RuvB forms 2 homohexamers on either side of HJ DNA bound by 1 or 2 RuvA tetramers; 4 subunits per hexamer contact DNA at a time. Coordinated motions by a converter formed by DNA-disengaged RuvB subunits stimulates ATP hydrolysis and nucleotide exchange. Immobilization of the converter enables RuvB to convert the ATP-contained energy into a lever motion, pulling 2 nucleotides of DNA out of the RuvA tetramer per ATP hydrolyzed, thus driving DNA branch migration. The RuvB motors rotate together with the DNA substrate, which together with the progressing nucleotide cycle form the mechanistic basis for DNA recombination by continuous HJ branch migration. Branch migration allows RuvC to scan DNA until it finds its consensus sequence, where it cleaves and resolves cruciform DNA. The polypeptide is Holliday junction branch migration complex subunit RuvB (Histophilus somni (strain 129Pt) (Haemophilus somnus)).